Consider the following 423-residue polypeptide: 3-phosphoshikimate 1-carboxyvinyltransferase (423 aa).

The 3-phosphoshikimate site is built by Lys19, Ser20, and Arg24. Residue Lys19 coordinates phosphoenolpyruvate. Phosphoenolpyruvate contacts are provided by Gly89 and Arg118. 3-phosphoshikimate is bound by residues Ser164, Ser165, Gln166, Ser192, Asp304, and Lys331. Residue Gln166 participates in phosphoenolpyruvate binding. Asp304 (proton acceptor) is an active-site residue. Positions 335 and 377 each coordinate phosphoenolpyruvate.

This sequence belongs to the EPSP synthase family. As to quaternary structure, monomer.

Its subcellular location is the cytoplasm. It carries out the reaction 3-phosphoshikimate + phosphoenolpyruvate = 5-O-(1-carboxyvinyl)-3-phosphoshikimate + phosphate. It functions in the pathway metabolic intermediate biosynthesis; chorismate biosynthesis. Its function is as follows. Catalyzes the transfer of the enolpyruvyl moiety of phosphoenolpyruvate (PEP) to the 5-hydroxyl of shikimate-3-phosphate (S3P) to produce enolpyruvyl shikimate-3-phosphate and inorganic phosphate. The chain is 3-phosphoshikimate 1-carboxyvinyltransferase from Korarchaeum cryptofilum (strain OPF8).